Here is a 438-residue protein sequence, read N- to C-terminus: Aflatoxin cluster transcriptional coactivator aflS (438 aa).

One can recognise an HTH iclR-type domain in the interval 65-134 (LALYNQLLAC…PSPGHVAHSV (70 aa)). A DNA-binding region (H-T-H motif) is located at residues 95 to 114 (FEDVADIAGVPECRLRRLVR).

Interacts with aflR.

It localises to the nucleus. It is found in the endosome. In terms of biological role, transcription coactivator involved in regulation of the aflatoxin biosynthesis gene cluster with aflR. The ratio of the expression data between aflS:aflR plays a crucial role in the regulation of aflatoxins production. A high ratio, produced at a range between 17 and 30 degrees Celsius, corresponds with the production profile of aflatoxin G1 biosynthesis. A low ratio, produced over 30 degrees Celsius, is related to aflatoxin B1 biosynthesis. AflJ may act in aflR transport to or from the nucleus, thus controlling the availability of aflR for transcriptional activation of aflatoxin biosynthesis cluster genes. AflJ may also assist in directing endosomes to the cytoplasmic membrane for aflatoxin export. In Aspergillus parasiticus (strain ATCC 56775 / NRRL 5862 / SRRC 143 / SU-1), this protein is Aflatoxin cluster transcriptional coactivator aflS.